The chain runs to 619 residues: DEAD-box ATP-dependent RNA helicase 14 (619 aa).

Position 2 is an N-acetylalanine (Ala-2). In terms of domain architecture, WW spans His-17–Pro-51. The tract at residues Glu-47 to Ala-139 is disordered. Positions Val-61 to Gln-71 are enriched in low complexity. Residues Pro-78–Arg-93 show a composition bias toward basic and acidic residues. Residues Pro-125–Ala-139 show a composition bias toward low complexity. At Ser-136 the chain carries Phosphoserine. Residues Met-158–Ala-186 carry the Q motif motif. Residues Trp-189–Val-363 enclose the Helicase ATP-binding domain. Ala-202–Thr-209 provides a ligand contact to ATP. Positions Asp-311–Asp-314 match the DEAD box motif. In terms of domain architecture, Helicase C-terminal spans Arg-392–Ala-536. The disordered stretch occupies residues Val-528–Arg-619. Positions Pro-552–Gly-568 are enriched in gly residues. 2 stretches are compositionally biased toward basic and acidic residues: residues Gly-582 to Asn-595 and Ser-609 to Arg-619.

This sequence belongs to the DEAD box helicase family. DDX5/DBP2 subfamily. Ubiquitous. Preferentially expressed in flowers and roots.

It is found in the nucleus. It catalyses the reaction ATP + H2O = ADP + phosphate + H(+). In terms of biological role, ATP-dependent RNA helicase involved nonsense-mediated mRNA decay and ribosome biogenesis through rRNA processing. This is DEAD-box ATP-dependent RNA helicase 14 (RH14) from Arabidopsis thaliana (Mouse-ear cress).